Reading from the N-terminus, the 442-residue chain is MFLIQEIIRKKRDGKTLSEEEIRFFINGIRDNTVSEGQIAALAMTIYFHDMSMDERVALTLAMRDSGTVLNWKSLNLNGPLVDKHSTGGVGDVTSLMLGPMVAACGGYVPMISGRGLGHTGGTLDKLEAIPGLDIFPNDDHFRRIIQQVGVAIIGQTSSLAPADKRFYATRDITATVDSIPLITASILAKKLAEGLDALVMDVKVGSGAFMPTYELSEQLAQAIVGVANNAGCRTSALLTDMNQVLASSAGNALEVREAVRFLTGESRNPRLYDVTMALCGEMLLAGGLASSADDAHSRLQAVLDNGKAADVFGRMVAAQRGPGDFVEHYDRYLPVATLSKPVFATREGVVTAMDTRALGMAVVSLGGGRRQASDTIDYSVGLDSMISLGERVDAQRPLAVIHANTEAQWQQAANEVRAAIQLGDTAPEKTPMVYRRVSAEA.

The protein belongs to the thymidine/pyrimidine-nucleoside phosphorylase family. In terms of assembly, homodimer.

It catalyses the reaction thymidine + phosphate = 2-deoxy-alpha-D-ribose 1-phosphate + thymine. The protein operates within pyrimidine metabolism; dTMP biosynthesis via salvage pathway; dTMP from thymine: step 1/2. The enzymes which catalyze the reversible phosphorolysis of pyrimidine nucleosides are involved in the degradation of these compounds and in their utilization as carbon and energy sources, or in the rescue of pyrimidine bases for nucleotide synthesis. This chain is Thymidine phosphorylase, found in Pectobacterium atrosepticum (strain SCRI 1043 / ATCC BAA-672) (Erwinia carotovora subsp. atroseptica).